A 219-amino-acid polypeptide reads, in one-letter code: Cytidylate kinase (219 aa).

Position 21–29 (21–29) interacts with ATP; it reads GPAASGKGT.

Belongs to the cytidylate kinase family. Type 1 subfamily.

It localises to the cytoplasm. The enzyme catalyses CMP + ATP = CDP + ADP. It catalyses the reaction dCMP + ATP = dCDP + ADP. This is Cytidylate kinase from Rickettsia prowazekii (strain Madrid E).